We begin with the raw amino-acid sequence, 221 residues long: Membrane-bound lytic murein transglycosylase E (221 aa).

The protein belongs to the transglycosylase Slt family.

The catalysed reaction is Exolytic cleavage of the (1-&gt;4)-beta-glycosidic linkage between N-acetylmuramic acid (MurNAc) and N-acetylglucosamine (GlcNAc) residues in peptidoglycan, from either the reducing or the non-reducing ends of the peptidoglycan chains, with concomitant formation of a 1,6-anhydrobond in the MurNAc residue.. Murein-degrading enzyme. May play a role in recycling of muropeptides during cell elongation and/or cell division. The polypeptide is Membrane-bound lytic murein transglycosylase E (mltE) (Buchnera aphidicola subsp. Acyrthosiphon pisum (strain APS) (Acyrthosiphon pisum symbiotic bacterium)).